Reading from the N-terminus, the 288-residue chain is Elongation factor Ts (288 aa).

An involved in Mg(2+) ion dislocation from EF-Tu region spans residues 79–82 (TDFV).

Belongs to the EF-Ts family.

Its subcellular location is the cytoplasm. Its function is as follows. Associates with the EF-Tu.GDP complex and induces the exchange of GDP to GTP. It remains bound to the aminoacyl-tRNA.EF-Tu.GTP complex up to the GTP hydrolysis stage on the ribosome. The sequence is that of Elongation factor Ts from Ehrlichia chaffeensis (strain ATCC CRL-10679 / Arkansas).